Consider the following 209-residue polypeptide: Guanylate kinase (209 aa).

A Guanylate kinase-like domain is found at 9–188; the sequence is GIMLVMSSPS…SVQQIKSIFI (180 aa). 16-23 contributes to the ATP binding site; sequence SPSGGGKT.

Belongs to the guanylate kinase family.

It is found in the cytoplasm. The catalysed reaction is GMP + ATP = GDP + ADP. In terms of biological role, essential for recycling GMP and indirectly, cGMP. This is Guanylate kinase from Ehrlichia ruminantium (strain Gardel).